A 152-amino-acid polypeptide reads, in one-letter code: Transcriptional regulator MraZ (152 aa).

2 consecutive SpoVT-AbrB domains span residues 5–52 (ANAV…PLPE) and 81–124 (AVDL…NEDA).

The protein belongs to the MraZ family. In terms of assembly, forms oligomers.

The protein resides in the cytoplasm. The protein localises to the nucleoid. This is Transcriptional regulator MraZ from Azotobacter vinelandii (strain DJ / ATCC BAA-1303).